The primary structure comprises 224 residues: DNA repair and recombination protein RadB (224 aa).

This sequence belongs to the eukaryotic RecA-like protein family. RadB subfamily.

Involved in DNA repair and in homologous recombination. May regulate the cleavage reactions of the branch-structured DNA. Has a very weak ATPase activity that is not stimulated by DNA. Binds DNA but does not promote DNA strands exchange. This is DNA repair and recombination protein RadB from Methanoculleus marisnigri (strain ATCC 35101 / DSM 1498 / JR1).